The following is a 1378-amino-acid chain: Attractin-like protein 1 (1378 aa).

A signal peptide spans M1–A51. Positions L52–Q90 constitute an EGF-like 1 domain. Residues L52–L1229 are Extracellular-facing. Intrachain disulfides connect C62-C78, C80-C89, and C92-C118. The N-linked (GlcNAc...) asparagine glycan is linked to N75. Residues C92–N208 enclose the CUB domain. N-linked (GlcNAc...) asparagine glycans are attached at residues N173 and N197. The 39-residue stretch at S206–D244 folds into the EGF-like 2 domain. Cystine bridges form between C210/C220, C214/C232, and C234/C243. Kelch repeat units lie at residues F315–E364, I366–S414, V426–D474, S479–G530, M532–G590, and S591–N637. Residue N379 is glycosylated (N-linked (GlcNAc...) asparagine). 3 PSI domains span residues N613–P656, R665–H708, and I714–L759. The N-linked (GlcNAc...) asparagine glycan is linked to N703. Residues V754–E872 enclose the C-type lectin domain. C775 and C871 are joined by a disulfide. Residues N777 and N897 are each glycosylated (N-linked (GlcNAc...) asparagine). PSI domains lie at P888–S938 and N941–P1011. Disulfide bonds link C1013-C1021, C1015-C1027, C1030-C1039, C1042-C1056, C1059-C1068, C1061-C1075, C1077-C1087, and C1090-C1105. Laminin EGF-like domains lie at C1013–A1058 and C1059–Y1107. A glycan (N-linked (GlcNAc...) asparagine) is linked at N1156. The chain crosses the membrane as a helical span at residues V1230–V1250. Residues W1251 to V1378 are Cytoplasmic-facing. The tract at residues V1287–C1324 is interaction with MC4R. Positions Q1351–V1378 are disordered.

In terms of assembly, interacts with MC4R. As to expression, highly expressed in brain, heart, lung, kidney and liver. In the central nervous system, it is highly expressed in the dentate gyrus, CA1-3 regions of the hippocampus, and the ventral taenia tecta.

It localises to the cell membrane. Its function is as follows. May play a role in melanocortin signaling pathways that regulate energy homeostasis. This chain is Attractin-like protein 1 (Atrnl1), found in Mus musculus (Mouse).